The chain runs to 165 residues: UPF0114 protein Ent638_3411 (165 aa).

3 consecutive transmembrane segments (helical) span residues 15–35, 53–73, and 136–156; these read LLAP…IKFF, LILV…LVMV, and LMWY…MGYL.

It belongs to the UPF0114 family.

The protein resides in the cell membrane. In Enterobacter sp. (strain 638), this protein is UPF0114 protein Ent638_3411.